We begin with the raw amino-acid sequence, 138 residues long: Acyl carrier protein 1, chloroplastic (138 aa).

Residues 1–56 (MASLSATTTVRVQPSSSSLHKLSQGNGRCSSIVCLDWGKSSFPTLRTSRRRSFISA) constitute a chloroplast transit peptide. A Carrier domain is found at 59 to 134 (KETIDKVCDI…QAADVIESLL (76 aa)). S94 is modified (O-(pantetheine 4'-phosphoryl)serine).

Belongs to the acyl carrier protein (ACP) family. 4'-phosphopantetheine is transferred from CoA to a specific serine of apo-ACP by acpS. This modification is essential for activity because fatty acids are bound in thioester linkage to the sulfhydryl of the prosthetic group.

It is found in the plastid. It localises to the chloroplast. It participates in lipid metabolism; fatty acid biosynthesis. Carrier of the growing fatty acid chain in fatty acid biosynthesis. The polypeptide is Acyl carrier protein 1, chloroplastic (ACL1.1) (Spinacia oleracea (Spinach)).